A 147-amino-acid chain; its full sequence is Cyanate hydratase (147 aa).

Catalysis depends on residues Arg-88, Glu-91, and Ser-114.

It belongs to the cyanase family.

It catalyses the reaction cyanate + hydrogencarbonate + 3 H(+) = NH4(+) + 2 CO2. Catalyzes the reaction of cyanate with bicarbonate to produce ammonia and carbon dioxide. This chain is Cyanate hydratase, found in Polynucleobacter asymbioticus (strain DSM 18221 / CIP 109841 / QLW-P1DMWA-1) (Polynucleobacter necessarius subsp. asymbioticus).